We begin with the raw amino-acid sequence, 204 residues long: N-(5'-phosphoribosyl)anthranilate isomerase (204 aa).

Belongs to the TrpF family.

The enzyme catalyses N-(5-phospho-beta-D-ribosyl)anthranilate = 1-(2-carboxyphenylamino)-1-deoxy-D-ribulose 5-phosphate. Its pathway is amino-acid biosynthesis; L-tryptophan biosynthesis; L-tryptophan from chorismate: step 3/5. In Desulforudis audaxviator (strain MP104C), this protein is N-(5'-phosphoribosyl)anthranilate isomerase.